Here is a 348-residue protein sequence, read N- to C-terminus: Selenide, water dikinase (348 aa).

Residue selenocysteine 17 is part of the active site. Selenocysteine 17 is a non-standard amino acid (selenocysteine). ATP is bound by residues lysine 20 and 48–50 (TAD). Aspartate 51 is a binding site for Mg(2+). Residues aspartate 68, aspartate 91, and 138 to 140 (GHT) contribute to the ATP site. Aspartate 91 serves as a coordination point for Mg(2+). Position 226 (aspartate 226) interacts with Mg(2+).

Belongs to the selenophosphate synthase 1 family. Class I subfamily. In terms of assembly, homodimer. Requires Mg(2+) as cofactor.

The catalysed reaction is hydrogenselenide + ATP + H2O = selenophosphate + AMP + phosphate + 2 H(+). In terms of biological role, synthesizes selenophosphate from selenide and ATP. This chain is Selenide, water dikinase, found in Clostridioides difficile (strain 630) (Peptoclostridium difficile).